Here is a 170-residue protein sequence, read N- to C-terminus: Peptide deformylase (170 aa).

Positions 91 and 133 each coordinate Fe cation. Glutamate 134 is a catalytic residue. Histidine 137 is a Fe cation binding site.

The protein belongs to the polypeptide deformylase family. The cofactor is Fe(2+).

It carries out the reaction N-terminal N-formyl-L-methionyl-[peptide] + H2O = N-terminal L-methionyl-[peptide] + formate. In terms of biological role, removes the formyl group from the N-terminal Met of newly synthesized proteins. Requires at least a dipeptide for an efficient rate of reaction. N-terminal L-methionine is a prerequisite for activity but the enzyme has broad specificity at other positions. This Histophilus somni (strain 2336) (Haemophilus somnus) protein is Peptide deformylase.